Consider the following 462-residue polypeptide: Argininosuccinate lyase (462 aa).

It belongs to the lyase 1 family. Argininosuccinate lyase subfamily.

The protein resides in the cytoplasm. It catalyses the reaction 2-(N(omega)-L-arginino)succinate = fumarate + L-arginine. The protein operates within amino-acid biosynthesis; L-arginine biosynthesis; L-arginine from L-ornithine and carbamoyl phosphate: step 3/3. The protein is Argininosuccinate lyase of Prochlorococcus marinus (strain MIT 9211).